The sequence spans 286 residues: UDP-3-O-acyl-N-acetylglucosamine deacetylase (286 aa).

Positions 79, 237, and 241 each coordinate Zn(2+). Residue H264 is the Proton donor of the active site.

The protein belongs to the LpxC family. Zn(2+) serves as cofactor.

It carries out the reaction a UDP-3-O-[(3R)-3-hydroxyacyl]-N-acetyl-alpha-D-glucosamine + H2O = a UDP-3-O-[(3R)-3-hydroxyacyl]-alpha-D-glucosamine + acetate. It participates in glycolipid biosynthesis; lipid IV(A) biosynthesis; lipid IV(A) from (3R)-3-hydroxytetradecanoyl-[acyl-carrier-protein] and UDP-N-acetyl-alpha-D-glucosamine: step 2/6. Catalyzes the hydrolysis of UDP-3-O-myristoyl-N-acetylglucosamine to form UDP-3-O-myristoylglucosamine and acetate, the committed step in lipid A biosynthesis. The sequence is that of UDP-3-O-acyl-N-acetylglucosamine deacetylase from Brucella abortus (strain 2308).